The chain runs to 87 residues: Beta-toxin Cn5 (87 aa).

Positions 1 to 19 (MNSLLMITACLFLIGTVWA) are cleaved as a signal peptide. Positions 20 to 85 (KEGYLVNKST…TYPLPNKSCS (66 aa)) constitute an LCN-type CS-alpha/beta domain. Disulfide bonds link Cys31/Cys84, Cys35/Cys60, Cys44/Cys65, and Cys48/Cys67.

This sequence belongs to the long (4 C-C) scorpion toxin superfamily. Sodium channel inhibitor family. Beta subfamily. As to expression, expressed by the venom gland.

Its subcellular location is the secreted. In terms of biological role, beta toxins bind voltage-independently at site-4 of sodium channels (Nav) and shift the voltage of activation toward more negative potentials thereby affecting sodium channel activation and promoting spontaneous and repetitive firing. This toxin is lethal to crustaceans (freshwater crayfish (Cambarellus montezumae spp.)), it provokes a reversible paralysis to insects (crickets (Achaeta spp.)), but is not toxic to mice. At high concentrations, it does displace the (beta) mammal-specific toxin Cn2 from rat brain synaptosomes. This is Beta-toxin Cn5 from Centruroides noxius (Mexican scorpion).